Here is a 1004-residue protein sequence, read N- to C-terminus: 2-oxoglutarate dehydrogenase E1 component (1004 aa).

Belongs to the alpha-ketoglutarate dehydrogenase family. Homodimer. Part of the 2-oxoglutarate dehydrogenase (OGDH) complex composed of E1 (2-oxoglutarate dehydrogenase), E2 (dihydrolipoamide succinyltransferase) and E3 (dihydrolipoamide dehydrogenase); the complex contains multiple copies of the three enzymatic components (E1, E2 and E3). Thiamine diphosphate serves as cofactor.

It catalyses the reaction N(6)-[(R)-lipoyl]-L-lysyl-[protein] + 2-oxoglutarate + H(+) = N(6)-[(R)-S(8)-succinyldihydrolipoyl]-L-lysyl-[protein] + CO2. Functionally, E1 component of the 2-oxoglutarate dehydrogenase (OGDH) complex which catalyzes the decarboxylation of 2-oxoglutarate, the first step in the conversion of 2-oxoglutarate to succinyl-CoA and CO(2). In Brucella abortus (strain S19), this protein is 2-oxoglutarate dehydrogenase E1 component.